The following is a 962-amino-acid chain: MTTETLTQLEQHELFIRRHIGPDSADQQEMLNFVGAESLEDLTQQIVPESIRLGRDLAVGSACGEAEGLASIRKYADKNKVFKSYIGMGYYGTIVPSVIQRNVFENPGWYTAYTPYQPEIAQGRLEAILNFQQLSMDLTGLDLASASLLDEATAAAEAMALAKRVSKAKKANIFFIADDVFPQTIDVVKTRAECFGFEIVVGPASEAVNYELFGALFQYTNHYGQITDFTELFAALQEKKAVVTVAADIMSLVSLKSPGSMGADVVFGSAQRFGVPMGFGGPHAAFFVTRDQHKRSLPGRIIGVSQDTRGNRALRMAMQTREQHIRREKANSNICTAQVLLANMASFYAVFHGPQGLKIIADRIHRLADIFAAGLKAKGVELVNNTWFDTVSFKVADSAAAQARAIAGEVNLRIDSDGILGVAMAETTTREDVAQLFDIVLGEGHGLDVAAIDADIIANGSNSIPAELVRQDAILEHPTFNRYHSETEMMRYIKRLENKDLALNHSMISLGSCTMKLNAATEMMPVSWPEFGNMHPFCPQDQAQGYAELIEELSNWLVDITGYDAMCMQPNSGASGEYAGLLAIKKYHESRGEGHRNVCLIPQSAHGTNPASAQLAGMKIVVTACDKQGNVDMEDLKAKAAEVAENLSCIMVTYPSTHGVYEETISEICEVIHQHGGQVYLDGANMNAQVGLTSPGSIGADVSHLNLHKTFAIPHGGGGPGMGPIGVKAHLAPFVAGHAVVKHGRESDNNGAVSAAPYGSASILPITWMYIKLLGYQGLRQSTQMALLNANYVMKKLSAHYPVLYTGRNDRVAHECIIDLRPLKEASGVTEMDIAKRLNDYGFHAPTMSFPVAGTLMIEPTESESKAELDRFIEAMVAIRGEIAKVEAGEWPADNNPLHNAPHTMADIMDSEFDSRPYSRETAVFPTAAVKANKFWPTVNRIDDVYGDRNLMCSCAPIDDYK.

Lysine 709 is subject to N6-(pyridoxal phosphate)lysine.

It belongs to the GcvP family. The glycine cleavage system is composed of four proteins: P, T, L and H. Requires pyridoxal 5'-phosphate as cofactor.

The catalysed reaction is N(6)-[(R)-lipoyl]-L-lysyl-[glycine-cleavage complex H protein] + glycine + H(+) = N(6)-[(R)-S(8)-aminomethyldihydrolipoyl]-L-lysyl-[glycine-cleavage complex H protein] + CO2. Functionally, the glycine cleavage system catalyzes the degradation of glycine. The P protein binds the alpha-amino group of glycine through its pyridoxal phosphate cofactor; CO(2) is released and the remaining methylamine moiety is then transferred to the lipoamide cofactor of the H protein. The chain is Glycine dehydrogenase (decarboxylating) from Shewanella loihica (strain ATCC BAA-1088 / PV-4).